We begin with the raw amino-acid sequence, 69 residues long: Cap-specific mRNA (nucleoside-2'-O-)-methyltransferase (69 aa).

Tyrosine 22 provides a ligand contact to mRNA. Positions 39, 66, and 68 each coordinate S-adenosyl-L-methionine.

This sequence belongs to the class I-like SAM-binding methyltransferase superfamily. Poxvirus/kinetoplastid 2'-O-MTase family. As to quaternary structure, interacts with poly(A) polymerase catalytic subunit OPG063. Interacts with OPG109 and OPG123; these interactions might help linking transcription to capping and polyadenylation.

The protein resides in the virion. It catalyses the reaction a 5'-end (N(7)-methyl 5'-triphosphoguanosine)-ribonucleoside in mRNA + S-adenosyl-L-methionine = a 5'-end (N(7)-methyl 5'-triphosphoguanosine)-(2'-O-methyl-ribonucleoside) in mRNA + S-adenosyl-L-homocysteine + H(+). Its function is as follows. Displays methyltransferase, positive regulation of the poly(A) polymerase and transcription elongation activities. Involved in the modification of both mRNA ends and in intermediate and late gene positive transcription elongation. At the mRNAs 5' end, methylates the ribose 2' OH group of the first transcribed nucleotide, thereby producing a 2'-O-methylpurine cap. At the 3' end, functions as a processivity factor which stimulates the activity of the viral poly(A) polymerase OPG063 that creates mRNA's poly(A) tail. In the presence of OPG102, OPG063 does not dissociate from the RNA allowing tail elongation to around 250 adenylates. The polypeptide is Cap-specific mRNA (nucleoside-2'-O-)-methyltransferase (OPG102) (Sus scrofa (Pig)).